The chain runs to 412 residues: Odorant receptor 47b (412 aa).

Residues 1–74 (MNDSGYQSNL…NLFIMCNVMT (74 aa)) lie on the Cytoplasmic side of the membrane. The chain crosses the membrane as a helical span at residues 75–95 (IFWTMFVALPESKNVIEMGDD). Topologically, residues 96–103 (LVWISGMA) are extracellular. A helical membrane pass occupies residues 104–124 (LVFTKIFYMHLRCDEIDELIS). Over 125-169 (DFEYYNRELRPHNIDEEVLGWQRLCYVIESGLYINCFCLVNFFSA) the chain is Cytoplasmic. A helical membrane pass occupies residues 170-190 (AIFLQPLLGEGKLPFHSVYPF). The Extracellular segment spans residues 191-229 (QWHRLDLHPYTFWFLYIWQSLTSQHNLMSILMVDMVGIS). The chain crosses the membrane as a helical span at residues 230–250 (TFLQTALNLKLLCIEIRKLGD). Residues 251 to 302 (MEVSDKRFHEEFCRVVRFHQHIIKLVGKANRAFNGAFNAQLMASFSLISIST) lie on the Cytoplasmic side of the membrane. A helical membrane pass occupies residues 303 to 323 (FETMAAAAVDPKMAAKFVLLM). The Extracellular portion of the chain corresponds to 324-330 (LVAFIQL). A helical membrane pass occupies residues 331-351 (SLWCVSGTLVYTQSVEVAQAA). Residues 352–389 (FDINDWHTKSPGIQRDISFVILRAQKPLMYVAEPFLPF) lie on the Cytoplasmic side of the membrane. Residues 390–410 (TLGTYMLVLKNCYRLLALMQE) traverse the membrane as a helical segment. The Extracellular portion of the chain corresponds to 411-412 (SM).

Belongs to the insect chemoreceptor superfamily. Heteromeric odorant receptor channel (TC 1.A.69) family. Or49a subfamily. As to quaternary structure, interacts with Orco. Complexes exist early in the endomembrane system in olfactory sensory neurons (OSNs), coupling these complexes to the conserved ciliary trafficking pathway. Expressed in olfactory sensory neurons in the antenna.

It is found in the cell membrane. Odorant receptor which mediates acceptance or avoidance behavior, depending on its substrates. The odorant receptor repertoire encodes a large collection of odor stimuli that vary widely in identity, intensity, and duration. May form a complex with Orco to form odorant-sensing units, providing sensitive and prolonged odorant signaling and calcium permeability. Plays an important role in sociosexual interactions since its enhances courtship in a pheromone-dependent manner. The polypeptide is Odorant receptor 47b (Or47b) (Drosophila melanogaster (Fruit fly)).